Reading from the N-terminus, the 331-residue chain is MKAYAVPFEKFVNLADARLGTKIISVTDDWFADANRLFQPTPAVWKEGVFDDNGKWMDGWESRRKRFEGYDSAVIRLGVPGSIKGVDIDTSFFTGNFPPSASLEACFLASGEPDENTQWTEVLSAVELQGNSHHYHEISNDKAFSHLRFNIYPDGGVARLRVYGIPFRDWSAVGDNEQVDLAAALNGGRALACSDEHFGRMSNILNPGRGINMGDGWETARRRTPGNDWVIVALGHPGEIEKIIVDTLHFKGNYPDTCSIQGAFVKGGTDSQIETQSLFWRELLPSQKLEMHAEHTFVEQINALGPITHIRLNVFPDGGVSRLRVLGKVAK.

The protein belongs to the allantoicase family.

It carries out the reaction allantoate + H2O = (S)-ureidoglycolate + urea. It participates in nitrogen metabolism; (S)-allantoin degradation; (S)-ureidoglycolate from allantoate (aminidohydrolase route): step 1/1. The polypeptide is Probable allantoicase (Pseudomonas fluorescens (strain Pf0-1)).